Here is a 513-residue protein sequence, read N- to C-terminus: Homeobox and leucine zipper protein Homez (513 aa).

The segment at residues Trp31–Trp90 is a DNA-binding region (homeobox 1). Glycyl lysine isopeptide (Lys-Gly) (interchain with G-Cter in SUMO2) cross-links involve residues Lys156, Lys174, and Lys176. Disordered regions lie at residues Leu200 to Asn221, Ser241 to Pro287, Arg303 to Lys328, Pro402 to Asp429, and Leu480 to Asp513. Over residues Ala205–Thr217 the composition is skewed to gly residues. Residues Pro248–Pro260 show a composition bias toward low complexity. Ser320 carries the post-translational modification Phosphoserine. DNA-binding regions (homeobox) lie at residues Gln324 to Gln384 and Thr418 to Val477. A Nuclear localization signal motif is present at residues Arg327–Lys332. At Thr418 the chain carries Phosphothreonine. Pro residues predominate over residues Pro419–Asp429.

In terms of assembly, homodimer or heterodimer (Potential). Interacts with HOXC8.

The protein localises to the nucleus. May function as a transcriptional regulator. The polypeptide is Homeobox and leucine zipper protein Homez (Homez) (Rattus norvegicus (Rat)).